Consider the following 810-residue polypeptide: MAAYLNRTISMVTGQTGPADDDRHASSTDTVDKSGPGSPLSRFNSSLQQSGSTMAANLLPESRLYQSNDKSPLQIFVRAKKKINDIYGEIEEYVHETTTFINALHAEAEIVDKAERELFESYVYKVAAIREVLQRDHMKVAFFGRTSNGKSSVINAMLREKILPSGIGHTTNCFCQVEGSNGGEAYLMTEGSEEKLNVVNIKQLANALCQEKLCESSLVRIFWPRERCSLLRDDVVFVDSPGVDVSANLDDWIDNHCLNADVFVLVLNAESTMTRAEKQFFHTVSQKLSKPNIFILNNRWDASANEPECQESVKSQHTERCIDFLTKELKVSNEKEAAERVFFVSARETLQARIEEAKGNPPHMGAIAEGFQIRYFEFQDFERKFEECISQSAVKTKFQQHSSRGKSVSGDMKSMLDNIYERITIFRNLKQDQKNLLTERIQGTETQMMQVTREMKMKIHNMVEEVEEKVSKALNEEIWRLGVLIDEFNMPFHPERLVLNIYKKELNAHVESGLGSNLRARLSMALAMNVESAQTEMTDRMHALVPNEQLLATSTKMVVRTQPFEMLYSLNCQNLCADFQEDLEFKFSWGIAAMIQRFTGKVRERSKKGQPALVNRQSSIGHSVSTPTTTPVEATPVCLLPAPVVAGITPEQLSLISRFAVSSIGSQGTVGGLVVAGVMLKTIGWRVLVGVGALYGCIYLYERLSWTNSAKERTFKSQYVRHATKKLKMIVDLTSANCSHQVQQELSSTFARLCRTVDTATTDMNDELKTLDSQLNILEANQKQLKLLRNKANYIQNELDIFEHNYISPQ.

Over 1–637 the chain is Cytoplasmic; sequence MAAYLNRTIS…TTTPVEATPV (637 aa). Thr8 carries the phosphothreonine modification. Residues 13–40 are disordered; that stretch reads TGQTGPADDDRHASSTDTVDKSGPGSPL. Positions 20 to 32 are enriched in basic and acidic residues; it reads DDDRHASSTDTVD. Ser38 carries the phosphoserine modification. The region spanning 134–382 is the Dynamin-type G domain; it reads QRDHMKVAFF…IRYFEFQDFE (249 aa). The tract at residues 144–151 is G1 motif; the sequence is GRTSNGKS. 147–152 provides a ligand contact to GTP; the sequence is SNGKSS. The G2 motif stretch occupies residues 170–171; the sequence is TT. A G3 motif region spans residues 239-242; the sequence is DSPG. 298-301 contributes to the GTP binding site; it reads NRWD. The G4 motif stretch occupies residues 298 to 301; that stretch reads NRWD. Position 327 (Lys327) is a region of interest, G5 motif. Ser345 is a GTP binding site. Residues 427–476 adopt a coiled-coil conformation; the sequence is RNLKQDQKNLLTERIQGTETQMMQVTREMKMKIHNMVEEVEEKVSKALNE. Thr553 is modified (phosphothreonine). Ser554 carries the phosphoserine modification. Thr555 bears the Phosphothreonine mark. Positions 609–630 are disordered; that stretch reads GQPALVNRQSSIGHSVSTPTTT. Residues 638–648 form a helical membrane-spanning segment; sequence CLLPAPVVAGI. Topologically, residues 649–668 are mitochondrial intermembrane; sequence TPEQLSLISRFAVSSIGSQG. A helical membrane pass occupies residues 669-689; it reads TVGGLVVAGVMLKTIGWRVLV. The Cytoplasmic segment spans residues 690 to 810; it reads GVGALYGCIY…IFEHNYISPQ (121 aa). Residues 759-806 are a coiled coil; that stretch reads TATTDMNDELKTLDSQLNILEANQKQLKLLRNKANYIQNELDIFEHNY.

This sequence belongs to the TRAFAC class dynamin-like GTPase superfamily. Dynamin/Fzo/YdjA family. Mitofusin subfamily. As to quaternary structure, interacts with Mul1. In terms of processing, ubiquitinated by park and Mul1. Ubiquitinated, probably by HUWE1, when dietary stearate (C18:0) levels are low; ubiquitination inhibits mitochondrial fusion. As to expression, widely expressed in embryos, accumulating in the mesoderm and endoderm during gut development. In the male germ line, it is expressed in spermatogonia, spermatocytes and early spermatids.

It is found in the mitochondrion outer membrane. The enzyme catalyses GTP + H2O = GDP + phosphate + H(+). Mitochondrial outer membrane GTPase that mediates mitochondrial clustering and fusion. Mitochondrial fusion is the physical merging of mitochondria that gives rise to mitochondrial networks, and this process is counterbalanced by mitochondrial fission which fragments networks. Promotes, but is not required for park recruitment to dysfunctional mitochondria. The polypeptide is Transmembrane GTPase Marf (Marf) (Drosophila melanogaster (Fruit fly)).